Here is a 415-residue protein sequence, read N- to C-terminus: Gamma-glutamyl phosphate reductase (415 aa).

It belongs to the gamma-glutamyl phosphate reductase family.

It is found in the cytoplasm. The catalysed reaction is L-glutamate 5-semialdehyde + phosphate + NADP(+) = L-glutamyl 5-phosphate + NADPH + H(+). Its pathway is amino-acid biosynthesis; L-proline biosynthesis; L-glutamate 5-semialdehyde from L-glutamate: step 2/2. Its function is as follows. Catalyzes the NADPH-dependent reduction of L-glutamate 5-phosphate into L-glutamate 5-semialdehyde and phosphate. The product spontaneously undergoes cyclization to form 1-pyrroline-5-carboxylate. In Bacillus mycoides (strain KBAB4) (Bacillus weihenstephanensis), this protein is Gamma-glutamyl phosphate reductase.